Consider the following 353-residue polypeptide: Photosystem II protein D1 (353 aa).

N-acetylthreonine is present on threonine 2. Position 2 is a phosphothreonine (threonine 2). A run of 3 helical transmembrane segments spans residues 29–46, 118–133, and 142–156; these read YVGWFGVIMIPTLLTAVS, HFFLGICCYMGREWEL, and WIAVAYSAPVAAATA. Residue histidine 118 participates in chlorophyll a binding. Residue tyrosine 126 coordinates pheophytin a. Residues aspartate 170 and glutamate 189 each contribute to the [CaMn4O5] cluster site. Residues 197-218 traverse the membrane as a helical segment; the sequence is FHMLGVAGVFGGSLFSAMHGSL. Histidine 198 contacts chlorophyll a. A quinone contacts are provided by residues histidine 215 and 264 to 265; that span reads SF. Fe cation is bound at residue histidine 215. Residue histidine 272 coordinates Fe cation. Residues 274-288 form a helical membrane-spanning segment; sequence FLAAWPVVGIWFTAL. Residues histidine 332, glutamate 333, aspartate 342, and alanine 344 each contribute to the [CaMn4O5] cluster site. A propeptide spanning residues 345 to 353 is cleaved from the precursor; it reads SVEAPSING.

The protein belongs to the reaction center PufL/M/PsbA/D family. As to quaternary structure, PSII is composed of 1 copy each of membrane proteins PsbA, PsbB, PsbC, PsbD, PsbE, PsbF, PsbH, PsbI, PsbJ, PsbK, PsbL, PsbM, PsbT, PsbX, PsbY, PsbZ, Psb30/Ycf12, at least 3 peripheral proteins of the oxygen-evolving complex and a large number of cofactors. It forms dimeric complexes. The cofactor is The D1/D2 heterodimer binds P680, chlorophylls that are the primary electron donor of PSII, and subsequent electron acceptors. It shares a non-heme iron and each subunit binds pheophytin, quinone, additional chlorophylls, carotenoids and lipids. D1 provides most of the ligands for the Mn4-Ca-O5 cluster of the oxygen-evolving complex (OEC). There is also a Cl(-1) ion associated with D1 and D2, which is required for oxygen evolution. The PSII complex binds additional chlorophylls, carotenoids and specific lipids.. Tyr-161 forms a radical intermediate that is referred to as redox-active TyrZ, YZ or Y-Z. In terms of processing, C-terminally processed by CTPA; processing is essential to allow assembly of the oxygen-evolving complex and thus photosynthetic growth.

It is found in the plastid. The protein resides in the chloroplast thylakoid membrane. The catalysed reaction is 2 a plastoquinone + 4 hnu + 2 H2O = 2 a plastoquinol + O2. Its function is as follows. Photosystem II (PSII) is a light-driven water:plastoquinone oxidoreductase that uses light energy to abstract electrons from H(2)O, generating O(2) and a proton gradient subsequently used for ATP formation. It consists of a core antenna complex that captures photons, and an electron transfer chain that converts photonic excitation into a charge separation. The D1/D2 (PsbA/PsbD) reaction center heterodimer binds P680, the primary electron donor of PSII as well as several subsequent electron acceptors. This chain is Photosystem II protein D1, found in Tupiella akineta (Green alga).